A 483-amino-acid polypeptide reads, in one-letter code: Cobyric acid synthase (483 aa).

Residues 251-438 (ALIVAVPMLP…LHGVFSADRF (188 aa)) form the GATase cobBQ-type domain. The active-site Nucleophile is C333. H430 is a catalytic residue.

The protein belongs to the CobB/CobQ family. CobQ subfamily.

Its pathway is cofactor biosynthesis; adenosylcobalamin biosynthesis. Its function is as follows. Catalyzes amidations at positions B, D, E, and G on adenosylcobyrinic A,C-diamide. NH(2) groups are provided by glutamine, and one molecule of ATP is hydrogenolyzed for each amidation. The chain is Cobyric acid synthase from Brucella suis (strain ATCC 23445 / NCTC 10510).